A 333-amino-acid chain; its full sequence is D-glutamate N-acetyltransferase (333 aa).

It belongs to the N-acetyltransferase DgcN family.

The catalysed reaction is D-glutamate + acetyl-CoA = N-acetyl-D-glutamate + CoA + H(+). It functions in the pathway amino-acid degradation. Functionally, N-acetyltransferase involved in a deamination-independent D-glutamate degradation pathway, named the DgcN-DgcA pathway. Catalyzes the transfer of the acetyl moiety from acetyl-CoA to D-glutamate to generate N-acetyl-D-glutamate. This is D-glutamate N-acetyltransferase from Tritonibacter scottomollicae (Epibacterium scottomollicae).